A 288-amino-acid chain; its full sequence is Polyamine aminopropyltransferase (288 aa).

Residues 9–238 (ETLHDQFGQY…GIMTFAWATD (230 aa)) form the PABS domain. Residue Q33 coordinates S-methyl-5'-thioadenosine. Residues H64 and D88 each coordinate spermidine. Residues E108 and 140-141 (DG) contribute to the S-methyl-5'-thioadenosine site. The active-site Proton acceptor is the D158. 158-161 (DCTD) contacts spermidine. P165 contributes to the S-methyl-5'-thioadenosine binding site.

It belongs to the spermidine/spermine synthase family. Homodimer or homotetramer.

Its subcellular location is the cytoplasm. The catalysed reaction is S-adenosyl 3-(methylsulfanyl)propylamine + putrescine = S-methyl-5'-thioadenosine + spermidine + H(+). It functions in the pathway amine and polyamine biosynthesis; spermidine biosynthesis; spermidine from putrescine: step 1/1. In terms of biological role, catalyzes the irreversible transfer of a propylamine group from the amino donor S-adenosylmethioninamine (decarboxy-AdoMet) to putrescine (1,4-diaminobutane) to yield spermidine. This chain is Polyamine aminopropyltransferase, found in Shigella sonnei (strain Ss046).